The primary structure comprises 249 residues: Type III pantothenate kinase (249 aa).

6 to 13 (DCGNSFIK) lines the ATP pocket. Residues Y93 and 100-103 (GMDR) each bind substrate. Catalysis depends on D102, which acts as the Proton acceptor. D122 serves as a coordination point for K(+). T125 is a binding site for ATP. Position 181 (T181) interacts with substrate.

Belongs to the type III pantothenate kinase family. As to quaternary structure, homodimer. NH4(+) serves as cofactor. The cofactor is K(+).

Its subcellular location is the cytoplasm. The enzyme catalyses (R)-pantothenate + ATP = (R)-4'-phosphopantothenate + ADP + H(+). It functions in the pathway cofactor biosynthesis; coenzyme A biosynthesis; CoA from (R)-pantothenate: step 1/5. In terms of biological role, catalyzes the phosphorylation of pantothenate (Pan), the first step in CoA biosynthesis. The polypeptide is Type III pantothenate kinase (Pseudomonas putida (strain ATCC 47054 / DSM 6125 / CFBP 8728 / NCIMB 11950 / KT2440)).